A 629-amino-acid chain; its full sequence is Ras GTPase-activating protein gap-1 (629 aa).

In terms of domain architecture, Ras-GAP spans 183 to 398; the sequence is DRIRPVLSSL…SVMASFLDNI (216 aa). In terms of domain architecture, PH spans 411 to 507; it reads TVFKFGNLQQ…WLNAIERQRN (97 aa).

The protein resides in the cytoplasm. GTPase-activating protein, which inhibits the vulval induction by acting as a negative regulator for the member of the Ras family let-60. Probably decreases the signaling activity of Ras by stimulating its intrinsic GTPase activity, thereby lowering the levels of GTP-bound, active Ras. The protein is Ras GTPase-activating protein gap-1 (gap-1) of Caenorhabditis elegans.